Here is a 235-residue protein sequence, read N- to C-terminus: Putative N-acetylmannosamine-6-phosphate 2-epimerase (235 aa).

It belongs to the NanE family.

It catalyses the reaction an N-acyl-D-glucosamine 6-phosphate = an N-acyl-D-mannosamine 6-phosphate. Its pathway is amino-sugar metabolism; N-acetylneuraminate degradation; D-fructose 6-phosphate from N-acetylneuraminate: step 3/5. Its function is as follows. Converts N-acetylmannosamine-6-phosphate (ManNAc-6-P) to N-acetylglucosamine-6-phosphate (GlcNAc-6-P). The polypeptide is Putative N-acetylmannosamine-6-phosphate 2-epimerase (Edwardsiella ictaluri (strain 93-146)).